Here is a 242-residue protein sequence, read N- to C-terminus: Ribonuclease PH (242 aa).

Residues Arg-86 and 124–126 (GTR) each bind phosphate.

The protein belongs to the RNase PH family. As to quaternary structure, homohexameric ring arranged as a trimer of dimers.

The enzyme catalyses tRNA(n+1) + phosphate = tRNA(n) + a ribonucleoside 5'-diphosphate. Functionally, phosphorolytic 3'-5' exoribonuclease that plays an important role in tRNA 3'-end maturation. Removes nucleotide residues following the 3'-CCA terminus of tRNAs; can also add nucleotides to the ends of RNA molecules by using nucleoside diphosphates as substrates, but this may not be physiologically important. Probably plays a role in initiation of 16S rRNA degradation (leading to ribosome degradation) during starvation. The sequence is that of Ribonuclease PH from Bacillus pumilus (strain SAFR-032).